The sequence spans 54 residues: Metallothionein-4 (54 aa).

It belongs to the metallothionein superfamily. Type 11 family.

This chain is Metallothionein-4 (MTP4), found in Yarrowia lipolytica (strain CLIB 122 / E 150) (Yeast).